The primary structure comprises 344 residues: Methionine aminopeptidase 1C, chloroplastic/mitochondrial (344 aa).

His172 is a substrate binding site. A divalent metal cation-binding residues include Asp189, Asp200, and His262. Residue His269 participates in substrate binding. Residues Glu296 and Glu327 each contribute to the a divalent metal cation site.

This sequence belongs to the peptidase M24A family. Methionine aminopeptidase type 1 subfamily. Co(2+) serves as cofactor. It depends on Zn(2+) as a cofactor. Mn(2+) is required as a cofactor. The cofactor is Fe(2+). As to expression, ubiquitous.

It is found in the plastid. It localises to the chloroplast. Its subcellular location is the mitochondrion. The enzyme catalyses Release of N-terminal amino acids, preferentially methionine, from peptides and arylamides.. Functionally, removes the N-terminal methionine from nascent proteins. The N-terminal methionine is often cleaved when the second residue in the primary sequence is small and uncharged (Met-Ala-, Cys, Gly, Pro, Ser, Thr, or Val). The polypeptide is Methionine aminopeptidase 1C, chloroplastic/mitochondrial (MAP1C) (Arabidopsis thaliana (Mouse-ear cress)).